Reading from the N-terminus, the 136-residue chain is Protein NrdI (136 aa).

It belongs to the NrdI family.

In terms of biological role, probably involved in ribonucleotide reductase function. In Salmonella paratyphi B (strain ATCC BAA-1250 / SPB7), this protein is Protein NrdI.